The primary structure comprises 98 residues: Aspartyl/glutamyl-tRNA(Asn/Gln) amidotransferase subunit C (98 aa).

The protein belongs to the GatC family. Heterotrimer of A, B and C subunits.

It carries out the reaction L-glutamyl-tRNA(Gln) + L-glutamine + ATP + H2O = L-glutaminyl-tRNA(Gln) + L-glutamate + ADP + phosphate + H(+). The enzyme catalyses L-aspartyl-tRNA(Asn) + L-glutamine + ATP + H2O = L-asparaginyl-tRNA(Asn) + L-glutamate + ADP + phosphate + 2 H(+). Functionally, allows the formation of correctly charged Asn-tRNA(Asn) or Gln-tRNA(Gln) through the transamidation of misacylated Asp-tRNA(Asn) or Glu-tRNA(Gln) in organisms which lack either or both of asparaginyl-tRNA or glutaminyl-tRNA synthetases. The reaction takes place in the presence of glutamine and ATP through an activated phospho-Asp-tRNA(Asn) or phospho-Glu-tRNA(Gln). The sequence is that of Aspartyl/glutamyl-tRNA(Asn/Gln) amidotransferase subunit C from Kocuria rhizophila (strain ATCC 9341 / DSM 348 / NBRC 103217 / DC2201).